The chain runs to 800 residues: Metabotropic glutamate receptor-like protein C (800 aa).

Positions 1–21 are cleaved as a signal peptide; that stretch reads MKMKIIFLILILIFSINIIKC. At 22–392 the chain is on the extracellular side; that stretch reads DKEFKMLTLL…EVEFSQSLQY (371 aa). Residues N69, N107, N166, N258, N276, N302, and N345 are each glycosylated (N-linked (GlcNAc...) asparagine). The chain crosses the membrane as a helical span at residues 393–413; it reads GFSITTGVLIAITIIMMLGIV. At 414–426 the chain is on the cytoplasmic side; the sequence is RYKSTPSIRSASP. A helical membrane pass occupies residues 427–447; sequence IFLNFILAGGIIVYIGIIVWV. Topologically, residues 448–463 are extracellular; the sequence is GPANDHQCNARLWLVT. Residues 464 to 484 form a helical membrane-spanning segment; sequence LGFSTLIGSLVVKNFRIWLIF. The Cytoplasmic segment spans residues 485 to 499; sequence DNPELKSISITNYQL. Residues 500-520 traverse the membrane as a helical segment; the sequence is FPWVGACLVINIILMSILTSV. At 521-551 the chain is on the extracellular side; sequence GDLREIDAQGIDSLGKYEFMKVCKMNSSGAS. Residue N546 is glycosylated (N-linked (GlcNAc...) asparagine). A helical membrane pass occupies residues 552–572; that stretch reads TLYTILAYFAALLLVGVFVSW. Residues 573-586 lie on the Cytoplasmic side of the membrane; it reads KIRIVDIQEFNESK. A helical membrane pass occupies residues 587–607; sequence AIANTLYAISFCLFVIVPLMI. Over 608–616 the chain is Extracellular; that stretch reads SPQDKQSET. Residues 617-637 form a helical membrane-spanning segment; sequence IVLCTAGLFITTAALLIIFTP. Residues 638–800 are Cytoplasmic-facing; the sequence is KFWRVFTLGD…NDTEEEDKNQ (163 aa). Disordered stretches follow at residues 658–694 and 718–800; these read QSNVATARAESSKSSSGPKLNRRGNLVSDDFTDTETS and EFDD…DKNQ. The span at 718 to 732 shows a compositional bias: acidic residues; that stretch reads EFDDNNIEQDNDNDN. Over residues 733 to 774 the composition is skewed to low complexity; that stretch reads DNNNNNNNNNNNNNNNNNNNNNNNNNNNNNNNNNNNNNNNNN. Positions 781 to 791 are enriched in basic and acidic residues; the sequence is NDEKVEEKQQN.

In the N-terminal section; belongs to the BMP lipoprotein family. The protein in the C-terminal section; belongs to the G-protein coupled receptor 3 family. GABA-B receptor subfamily.

It localises to the membrane. The protein is Metabotropic glutamate receptor-like protein C (grlC) of Dictyostelium discoideum (Social amoeba).